A 157-amino-acid polypeptide reads, in one-letter code: S-ribosylhomocysteine lyase (157 aa).

Positions 54, 58, and 126 each coordinate Fe cation.

Belongs to the LuxS family. Homodimer. The cofactor is Fe cation.

It catalyses the reaction S-(5-deoxy-D-ribos-5-yl)-L-homocysteine = (S)-4,5-dihydroxypentane-2,3-dione + L-homocysteine. In terms of biological role, involved in the synthesis of autoinducer 2 (AI-2) which is secreted by bacteria and is used to communicate both the cell density and the metabolic potential of the environment. The regulation of gene expression in response to changes in cell density is called quorum sensing. Catalyzes the transformation of S-ribosylhomocysteine (RHC) to homocysteine (HC) and 4,5-dihydroxy-2,3-pentadione (DPD). The protein is S-ribosylhomocysteine lyase of Bacillus cytotoxicus (strain DSM 22905 / CIP 110041 / 391-98 / NVH 391-98).